The following is a 294-amino-acid chain: Acetyl-coenzyme A carboxylase carboxyl transferase subunit beta (294 aa).

A CoA carboxyltransferase N-terminal domain is found at 25 to 294 (IWTKCDNCGQ…PKVDYRHCVE (270 aa)). The Zn(2+) site is built by Cys29, Cys32, Cys48, and Cys51. The C4-type zinc finger occupies 29–51 (CDNCGQLLYKKELERNLEVCPKC).

This sequence belongs to the AccD/PCCB family. As to quaternary structure, acetyl-CoA carboxylase is a heterohexamer composed of biotin carboxyl carrier protein (AccB), biotin carboxylase (AccC) and two subunits each of ACCase subunit alpha (AccA) and ACCase subunit beta (AccD). Zn(2+) serves as cofactor.

The protein resides in the cytoplasm. The enzyme catalyses N(6)-carboxybiotinyl-L-lysyl-[protein] + acetyl-CoA = N(6)-biotinyl-L-lysyl-[protein] + malonyl-CoA. It participates in lipid metabolism; malonyl-CoA biosynthesis; malonyl-CoA from acetyl-CoA: step 1/1. Its function is as follows. Component of the acetyl coenzyme A carboxylase (ACC) complex. Biotin carboxylase (BC) catalyzes the carboxylation of biotin on its carrier protein (BCCP) and then the CO(2) group is transferred by the transcarboxylase to acetyl-CoA to form malonyl-CoA. In Blochmanniella pennsylvanica (strain BPEN), this protein is Acetyl-coenzyme A carboxylase carboxyl transferase subunit beta.